Reading from the N-terminus, the 114-residue chain is Pancreatic progenitor cell differentiation and proliferation factor (114 aa).

Ser-9 is modified (phosphoserine). Disordered regions lie at residues 22–47 (GSTSSNSSCSSTECPGEAIPHPPGLP) and 75–114 (AEHSEPPQASSSMTACGLARDAPRKQPGGQSSTASAGPPS). The segment covering 23–33 (STSSNSSCSST) has biased composition (low complexity). Residues 102 to 114 (GGQSSTASAGPPS) show a composition bias toward polar residues.

This sequence belongs to the PPDPF family.

Probable regulator of exocrine pancreas development. The polypeptide is Pancreatic progenitor cell differentiation and proliferation factor (PPDPF) (Homo sapiens (Human)).